The primary structure comprises 495 residues: MKFELVFIPYPGIGHLRSTVEMAKLLVDRETRLSISVIILPFISEGEVGASDYIAALSASSNNRLRYEVISAVDQPTIEMTTIEIHMKNQEPKVRSTVAKLLEDYSSKPDSPKIAGFVLDMFCTSMVDVANEFGFPSYMFYTSSAGILSVTYHVQMLCDENKYDVSENDYADSEAVLNFPSLSRPYPVKCLPHALAANMWLPVFVNQARKFREMKGILVNTVAELEPYVLKFLSSSDTPPVYPVGPLLHLENQRDDSKDEKRLEIIRWLDQQPPSSVVFLCFGSMGGFGEEQVREIAIALERSGHRFLWSLRRASPNIFKELPGEFTNLEEVLPEGFFDRTKDIGKVIGWAPQVAVLANPAIGGFVTHCGWNSTLESLWFGVPTAAWPLYAEQKFNAFLMVEELGLAVEIRKYWRGEHLAGLPTATVTAEEIEKAIMCLMEQDSDVRKRVKDMSEKCHVALMDGGSSRTALQKFIEEVAKNIVSLDKEFEHVALK.

UDP-alpha-D-glucose-binding positions include Ser284, 351 to 353 (APQ), 368 to 376 (HCGWNSTLE), and 390 to 393 (YAEQ).

The protein belongs to the UDP-glycosyltransferase family.

In Arabidopsis thaliana (Mouse-ear cress), this protein is UDP-glycosyltransferase 71B7 (UGT71B7).